Reading from the N-terminus, the 101-residue chain is Small ribosomal subunit protein uS14 (101 aa).

The protein belongs to the universal ribosomal protein uS14 family. As to quaternary structure, part of the 30S ribosomal subunit. Contacts proteins S3 and S10.

In terms of biological role, binds 16S rRNA, required for the assembly of 30S particles and may also be responsible for determining the conformation of the 16S rRNA at the A site. This Blochmanniella floridana protein is Small ribosomal subunit protein uS14.